The sequence spans 621 residues: Chaperone protein HscA homolog (621 aa).

Belongs to the heat shock protein 70 family.

Its function is as follows. Chaperone involved in the maturation of iron-sulfur cluster-containing proteins. Has a low intrinsic ATPase activity which is markedly stimulated by HscB. The polypeptide is Chaperone protein HscA homolog (Ralstonia pickettii (strain 12J)).